A 372-amino-acid polypeptide reads, in one-letter code: Fatty acid 2-hydroxylase (372 aa).

A Cytochrome b5 heme-binding domain is found at 8 to 86 (AASFTSAEVQ…LEQYYVGELR (79 aa)). Heme contacts are provided by His43 and His69. The next 2 helical transmembrane spans lie at 168-188 (VWYS…WSYY) and 213-233 (SVFI…EYLI). The region spanning 219-361 (FVLGMLIWTL…TKLWDYFFHT (143 aa)) is the Fatty acid hydroxylase domain. Residues His234, His239, His257, His260, and His261 each coordinate Zn(2+). 2 consecutive transmembrane segments (helical) span residues 268-288 (SRLV…YVFL) and 290-310 (LILP…GYVL). 5 residues coordinate Zn(2+): His315, His319, His336, His339, and His340.

It belongs to the sterol desaturase family. SCS7 subfamily. The cofactor is Zn(2+). In terms of tissue distribution, detected in oligodendrocytes (at protein level). Detected in sciatic nerve.

The protein localises to the endoplasmic reticulum membrane. It localises to the microsome membrane. The catalysed reaction is a 1,2-saturated fatty acid + 2 Fe(II)-[cytochrome b5] + O2 + 2 H(+) = a (R)-2-hydroxy fatty acid + 2 Fe(III)-[cytochrome b5] + H2O. It carries out the reaction hexadecanoate + 2 Fe(II)-[cytochrome b5] + O2 + 2 H(+) = (R)-2-hydroxyhexadecanoate + 2 Fe(III)-[cytochrome b5] + H2O. It catalyses the reaction octadecanoate + 2 Fe(II)-[cytochrome b5] + O2 + 2 H(+) = (R)-2-hydroxyoctadecanoate + 2 Fe(III)-[cytochrome b5] + H2O. The enzyme catalyses docosanoate + 2 Fe(II)-[cytochrome b5] + O2 + 2 H(+) = 2-hydroxydocosanoate + 2 Fe(III)-[cytochrome b5] + H2O. The catalysed reaction is tetracosanoate + 2 Fe(II)-[cytochrome b5] + O2 + 2 H(+) = (R)-2-hydroxytetracosanoate + 2 Fe(III)-[cytochrome b5] + H2O. It participates in lipid metabolism; fatty acid metabolism. The protein operates within sphingolipid metabolism; galactosylceramide biosynthesis. Functionally, catalyzes the hydroxylation of free fatty acids at the C-2 position to produce 2-hydroxy fatty acids, which are building blocks of sphingolipids and glycosphingolipids common in neural tissue and epidermis. FA2H is stereospecific for the production of (R)-2-hydroxy fatty acids. Plays an essential role in the synthesis of galactosphingolipids of the myelin sheath. Responsible for the synthesis of sphingolipids and glycosphingolipids involved in the formation of epidermal lamellar bodies critical for skin permeability barrier. Participates in the synthesis of glycosphingolipids and a fraction of type II wax diesters in sebaceous gland, specifically regulating hair follicle homeostasis. Involved in the synthesis of sphingolipids of plasma membrane rafts, controlling lipid raft mobility and trafficking of raft-associated proteins. The chain is Fatty acid 2-hydroxylase from Rattus norvegicus (Rat).